Reading from the N-terminus, the 295-residue chain is Nucleotide-binding protein MCA0739 (295 aa).

ATP is bound at residue 8–15 (GFSGSGKS). A GTP-binding site is contributed by 60 to 63 (DARN).

It belongs to the RapZ-like family.

In terms of biological role, displays ATPase and GTPase activities. The protein is Nucleotide-binding protein MCA0739 of Methylococcus capsulatus (strain ATCC 33009 / NCIMB 11132 / Bath).